Here is a 117-residue protein sequence, read N- to C-terminus: B-enzyme (117 aa).

D89 is an active-site residue.

The enzyme catalyses Hydrolysis of (1-&gt;4)-beta-linkages between N-acetylmuramic acid and N-acetyl-D-glucosamine residues in a peptidoglycan and between N-acetyl-D-glucosamine residues in chitodextrins.. The polypeptide is B-enzyme (lyzB) (Bacillus subtilis).